The sequence spans 519 residues: Cytochrome P450 88A1 (519 aa).

A helical membrane pass occupies residues 1–21; that stretch reads MLGVGMAAAVLLGAVALLLAD. Cys-466 is a heme binding site.

Belongs to the cytochrome P450 family. Heme serves as cofactor. Expressed in roots, developing leaves, the vegetative meristem, and suspension culture cells.

The protein localises to the membrane. It participates in plant hormone biosynthesis; gibberellin biosynthesis. The protein is Cytochrome P450 88A1 (CYP88A1) of Zea mays (Maize).